A 271-amino-acid chain; its full sequence is GPN-loop GTPase 3 (271 aa).

Position 13–18 (13–18 (GAGKST)) interacts with GTP. The Gly-Pro-Asn (GPN)-loop; involved in dimer interface signature appears at 70 to 72 (GPN). 173–176 (SKLD) is a GTP binding site.

Belongs to the GPN-loop GTPase family. As to quaternary structure, heterodimers with GPN1 or GPN2. Binds to RNA polymerase II (RNAPII).

Its function is as follows. Small GTPase required for proper nuclear import of RNA polymerase II and III (RNAPII and RNAPIII). May act at an RNAP assembly step prior to nuclear import. The polypeptide is GPN-loop GTPase 3 (Candida glabrata (strain ATCC 2001 / BCRC 20586 / JCM 3761 / NBRC 0622 / NRRL Y-65 / CBS 138) (Yeast)).